The chain runs to 342 residues: Glycerol-1-phosphate dehydrogenase [NAD(P)+] (342 aa).

Residues 84 to 88 (GRPID) and 106 to 109 (TSAS) each bind NAD(+). D111 provides a ligand contact to substrate. S115 provides a ligand contact to NAD(+). D160 lines the substrate pocket. The Zn(2+) site is built by D160 and H241. H245 is a substrate binding site. H260 is a Zn(2+) binding site.

The protein belongs to the glycerol-1-phosphate dehydrogenase family. In terms of assembly, homodimer. The cofactor is Zn(2+).

The protein localises to the cytoplasm. The enzyme catalyses sn-glycerol 1-phosphate + NAD(+) = dihydroxyacetone phosphate + NADH + H(+). It carries out the reaction sn-glycerol 1-phosphate + NADP(+) = dihydroxyacetone phosphate + NADPH + H(+). Its pathway is membrane lipid metabolism; glycerophospholipid metabolism. Its function is as follows. Catalyzes the NAD(P)H-dependent reduction of dihydroxyacetonephosphate (DHAP or glycerone phosphate) to glycerol 1-phosphate (G1P). The G1P thus generated is used as the glycerophosphate backbone of phospholipids in the cellular membranes of Archaea. The sequence is that of Glycerol-1-phosphate dehydrogenase [NAD(P)+] from Pyrobaculum arsenaticum (strain DSM 13514 / JCM 11321 / PZ6).